We begin with the raw amino-acid sequence, 290 residues long: ATP synthase gamma chain (290 aa).

It belongs to the ATPase gamma chain family. As to quaternary structure, F-type ATPases have 2 components, CF(1) - the catalytic core - and CF(0) - the membrane proton channel. CF(1) has five subunits: alpha(3), beta(3), gamma(1), delta(1), epsilon(1). CF(0) has three main subunits: a, b and c.

It is found in the cell inner membrane. Its function is as follows. Produces ATP from ADP in the presence of a proton gradient across the membrane. The gamma chain is believed to be important in regulating ATPase activity and the flow of protons through the CF(0) complex. The sequence is that of ATP synthase gamma chain from Chelativorans sp. (strain BNC1).